Reading from the N-terminus, the 72-residue chain is Osmotically-inducible lipoprotein B (72 aa).

Positions 1–23 (MFVTSKKMTAAVLAITLAMSLSA) are cleaved as a signal peptide. The N-palmitoyl cysteine moiety is linked to residue C24. A lipid anchor (S-diacylglycerol cysteine) is attached at C24.

The protein localises to the cell membrane. Its function is as follows. Provides resistance to osmotic stress. May be important for stationary-phase survival. This Escherichia coli O157:H7 protein is Osmotically-inducible lipoprotein B (osmB).